Here is a 68-residue protein sequence, read N- to C-terminus: Copper transport protein ATOX1 (68 aa).

The 63-residue stretch at 1–63 (MPKHEFSVDM…TLNKTGKAVS (63 aa)) folds into the HMA domain. Cu cation contacts are provided by Cys-12 and Cys-15. Position 47 is a phosphoserine (Ser-47). Lys-60 is subject to N6-acetyllysine.

Belongs to the ATX1 family. As to quaternary structure, homodimer. Interacts with ATP7B. Interacts with ATP7A. Interacts (via dimer form) with SLC31A1 (via C-terminal domain); this interaction improves ATOX1 stability and controls intracellular Cu(I) levels.

Its function is as follows. Binds and deliver cytosolic copper to the copper ATPase proteins. May be important in cellular antioxidant defense. The chain is Copper transport protein ATOX1 from Mus musculus (Mouse).